The sequence spans 504 residues: Potassium voltage-gated channel subfamily V member 1 (504 aa).

2 disordered regions span residues 1-22 (MDLSPRNRPLLESSSLDSGGSL) and 172-193 (KKDTDDQESQHESEQDFSQGPC). Topologically, residues 1–214 (MDLSPRNRPL…EKPGSSTAAR (214 aa)) are cytoplasmic. Residues 10-22 (LLESSSLDSGGSL) are compositionally biased toward low complexity. A compositionally biased stretch (basic and acidic residues) spans 172–185 (KKDTDDQESQHESE). A helical transmembrane segment spans residues 215 to 235 (IFGVISIIFVAVSIVNMALMS). Residues 236-242 (AELSWLN) are Extracellular-facing. A helical transmembrane segment spans residues 243–263 (LQLLEILEYVCISWFTGEFIL). The Cytoplasmic segment spans residues 264 to 280 (RFLCVKDRCRFLRKVPN). Residues 281–301 (IIDLLAILPFYITLLVESLSG) traverse the membrane as a helical segment. The Extracellular portion of the chain corresponds to 302 to 313 (SHTTQELENVGR). A helical; Voltage-sensor transmembrane segment spans residues 314-335 (LVQVLRLLRALRMLKLGRHSTG). At 336 to 349 (LRSLGMTITQCYEE) the chain is on the cytoplasmic side. Residues 350–370 (VGLLLLFLSVGISIFSTIEYF) traverse the membrane as a helical segment. The Selectivity filter motif lies at 396-401 (TVGYGD). The helical transmembrane segment at 411–431 (IVAFMCILSGILVLALPIAII) threads the bilayer. The Cytoplasmic segment spans residues 432-504 (NDRFSACYFT…RSSGGDDFWF (73 aa)).

Belongs to the potassium channel family. V (TC 1.A.1.2) subfamily. Kv8.1/KCNV1 sub-subfamily. Heteromultimer with KCNB1 and KCNB2. Interacts with KCNC4 and KCND1. As to expression, detected in brain, throughout layers II, IV and VI of the brain cortex. Detected in cerebellum and hippocampus, in the granule cell layer, Purkinje cell layer, pyramidal cell layer and dentate gyrus. Detected at lower levels in olfactory bulb, amygdala, thalamus, hypothalamus, midbrain and brainstem.

It localises to the cell membrane. Its function is as follows. Potassium channel subunit that does not form functional channels by itself. Modulates KCNB1 and KCNB2 channel activity by shifting the threshold for inactivation to more negative values and by slowing the rate of inactivation. Can down-regulate the channel activity of KCNB1, KCNB2, KCNC4 and KCND1, possibly by trapping them in intracellular membranes. The protein is Potassium voltage-gated channel subfamily V member 1 (KCNV1) of Mesocricetus auratus (Golden hamster).